The chain runs to 335 residues: MWRLLATLSCLLVLTSARSSLYFPPLSDELVNFVNKQNTTWKAGHNFYNVDLSYVKKLCGAILGGPKLPQRDAFAADVVLPESFDAREQWPNCPTIKEIRDQGSCGSCWAFGAVEAISDRICIHSNGRVNVEVSAEDMLTCCGGECGDGCNGGFPSGAWNFWTKKGLVSGGLYNSHVGCRPYSIPPCEHHVNGSRPPCTGEGDTPKCSKTCEPGYSPSYKEDKHFGCSSYSVANNEKEIMAEIYKNGPVEGAFSVYSDFLLYKSGVYQHVSGEIMGGHAIRILGWGVENGTPYWLVGNSWNTDWGDNGFFKILRGQDHCGIESEIVAGMPCTHQY.

The N-terminal stretch at 1-17 (MWRLLATLSCLLVLTSA) is a signal peptide. Positions 18-79 (RSSLYFPPLS…QRDAFAADVV (62 aa)) are cleaved as a propeptide — activation peptide. 6 cysteine pairs are disulfide-bonded: Cys-93–Cys-122, Cys-105–Cys-150, Cys-141–Cys-207, Cys-142–Cys-146, Cys-179–Cys-211, and Cys-187–Cys-198. Cys-108 is a catalytic residue. Residue Asn-192 is glycosylated (N-linked (GlcNAc...) asparagine). An N6-acetyllysine modification is found at Lys-220. A disulfide bond links Cys-227 and Cys-331. Residues His-278 and Asn-298 contribute to the active site. Residues 333 to 335 (HQY) constitute a propeptide that is removed on maturation.

The protein belongs to the peptidase C1 family. Dimer of a heavy chain and a light chain cross-linked by a disulfide bond. Interacts with SRPX2. Directly interacts with SHKBP1. Expressed in myoblasts, the myotube, fibroblasts and fetal muscle (at protein level). Expressed in the spleen (at protein level).

It localises to the lysosome. The protein resides in the melanosome. Its subcellular location is the secreted. It is found in the extracellular space. The protein localises to the apical cell membrane. The catalysed reaction is Hydrolysis of proteins with broad specificity for peptide bonds. Preferentially cleaves -Arg-Arg-|-Xaa bonds in small molecule substrates (thus differing from cathepsin L). In addition to being an endopeptidase, shows peptidyl-dipeptidase activity, liberating C-terminal dipeptides.. Functionally, thiol protease which is believed to participate in intracellular degradation and turnover of proteins. Cleaves matrix extracellular phosphoglycoprotein MEPE. Involved in the solubilization of cross-linked TG/thyroglobulin in the thyroid follicle lumen. Has also been implicated in tumor invasion and metastasis. This chain is Cathepsin B (CTSB), found in Bos taurus (Bovine).